The chain runs to 115 residues: Large ribosomal subunit protein uL24 (115 aa).

It belongs to the universal ribosomal protein uL24 family. As to quaternary structure, part of the 50S ribosomal subunit.

One of two assembly initiator proteins, it binds directly to the 5'-end of the 23S rRNA, where it nucleates assembly of the 50S subunit. Functionally, one of the proteins that surrounds the polypeptide exit tunnel on the outside of the subunit. The polypeptide is Large ribosomal subunit protein uL24 (Acaryochloris marina (strain MBIC 11017)).